We begin with the raw amino-acid sequence, 1214 residues long: BOS complex subunit NOMO1 (1214 aa).

The N-terminal stretch at methionine 1 to glycine 23 is a signal peptide. Over serine 24 to glutamine 1150 the chain is Extracellular. N-linked (GlcNAc...) asparagine glycans are attached at residues asparagine 42, asparagine 210, and asparagine 610. The stretch at lysine 692–glutamate 720 forms a coiled coil. Basic and acidic residues predominate over residues threonine 708–alanine 726. Positions threonine 708–methionine 733 are disordered. Residues glycine 1151–tyrosine 1167 traverse the membrane as a helical segment. Over asparagine 1168–threonine 1214 the chain is Cytoplasmic. Residues glycine 1190–threonine 1214 are disordered. 2 positions are modified to phosphoserine: serine 1196 and serine 1197. A compositionally biased stretch (basic residues) spans glutamine 1205 to threonine 1214.

In terms of assembly, component of the back of Sec61 (BOS) complex, composed of NCLN/Nicalin, NOMO (NOMO1, NOMO2 or NOMO3) and TMEM147. The BOS complex is part of the multi-pass translocon (MPT) complex, composed of three subcomplexes, the GEL complex (composed of RAB5IF/OPTI and TMCO1), the BOS complex (composed of NCLN/Nicalin, NOMO and TMEM147) and the PAT complex (composed of WDR83OS/Asterix and CCDC47). The MPT complex associates with the SEC61 complex.

It localises to the endoplasmic reticulum membrane. In terms of biological role, component of the multi-pass translocon (MPT) complex that mediates insertion of multi-pass membrane proteins into the lipid bilayer of membranes. The MPT complex takes over after the SEC61 complex: following membrane insertion of the first few transmembrane segments of proteins by the SEC61 complex, the MPT complex occludes the lateral gate of the SEC61 complex to promote insertion of subsequent transmembrane regions. This chain is BOS complex subunit NOMO1, found in Mus musculus (Mouse).